The sequence spans 102 residues: Monothiol glutaredoxin-S5 (102 aa).

A Glutaredoxin domain is found at 1 to 101 (MENLQKMISE…PMLKRAGALW (101 aa)). A [2Fe-2S] cluster-binding site is contributed by Cys-21. A Responsive for interaction with TGA factors motif is present at residues 99 to 102 (ALWL).

This sequence belongs to the glutaredoxin family. CC-type subfamily.

Its subcellular location is the cytoplasm. It localises to the nucleus. Its function is as follows. May only reduce GSH-thiol disulfides, but not protein disulfides. In Arabidopsis thaliana (Mouse-ear cress), this protein is Monothiol glutaredoxin-S5 (GRXS5).